Consider the following 543-residue polypeptide: Chaperonin GroEL (543 aa).

ATP-binding positions include 29–32 (TLGP), 86–90 (DGTTT), glycine 413, 477–479 (DAL), and aspartate 493.

The protein belongs to the chaperonin (HSP60) family. As to quaternary structure, forms a cylinder of 14 subunits composed of two heptameric rings stacked back-to-back. Interacts with the co-chaperonin GroES.

Its subcellular location is the cytoplasm. It carries out the reaction ATP + H2O + a folded polypeptide = ADP + phosphate + an unfolded polypeptide.. Its function is as follows. Together with its co-chaperonin GroES, plays an essential role in assisting protein folding. The GroEL-GroES system forms a nano-cage that allows encapsulation of the non-native substrate proteins and provides a physical environment optimized to promote and accelerate protein folding. The chain is Chaperonin GroEL from Clostridium novyi (strain NT).